Consider the following 438-residue polypeptide: Citrate synthase (438 aa).

Active-site residues include His-306 and Asp-364.

Belongs to the citrate synthase family.

It carries out the reaction oxaloacetate + acetyl-CoA + H2O = citrate + CoA + H(+). The protein operates within carbohydrate metabolism; tricarboxylic acid cycle; isocitrate from oxaloacetate: step 1/2. The chain is Citrate synthase (gltA) from Bartonella quintana (strain Toulouse) (Rochalimaea quintana).